The following is a 561-amino-acid chain: uncharacterized protein (561 aa).

Disordered regions lie at residues 20–42 (IQEQATSDTKPESSPDINLGCSP) and 82–283 (QIGS…STPF). Positions 103-131 (DKISEDTDQERVVVCESLENKSSSKDKSP) are enriched in basic and acidic residues. 2 stretches are compositionally biased toward basic residues: residues 135 to 156 (RSPKRHKSSKKHKSSKKHKSSK) and 165 to 185 (KSSKRHKSHKKKDKSHKKRYR). 3 stretches are compositionally biased toward basic and acidic residues: residues 192-203 (SLSRDRSSSRDR), 211-247 (YSRDRSLSRDRSLSRDRSLSRDRSPPRDRSLSRDRSP), and 259-272 (PLRDRSPTRDRSVS).

The protein belongs to the mimivirus L41 family.

This is an uncharacterized protein from Acanthamoeba polyphaga (Amoeba).